We begin with the raw amino-acid sequence, 224 residues long: N-(5'-phosphoribosyl)anthranilate isomerase (224 aa).

This sequence belongs to the TrpF family.

It catalyses the reaction N-(5-phospho-beta-D-ribosyl)anthranilate = 1-(2-carboxyphenylamino)-1-deoxy-D-ribulose 5-phosphate. It participates in amino-acid biosynthesis; L-tryptophan biosynthesis; L-tryptophan from chorismate: step 3/5. In Saccharomyces cerevisiae (strain ATCC 204508 / S288c) (Baker's yeast), this protein is N-(5'-phosphoribosyl)anthranilate isomerase (TRP1).